Reading from the N-terminus, the 205-residue chain is E3 ubiquitin-protein ligase complex slx8-rfp subunit rfp2 (205 aa).

The RING-type; degenerate zinc finger occupies Cys147 to His190.

Part of an E3 ubiquitin complex including rfp1, rfp2 and slx8. Interacts with slx8.

Its subcellular location is the nucleus. The catalysed reaction is S-ubiquitinyl-[E2 ubiquitin-conjugating enzyme]-L-cysteine + [acceptor protein]-L-lysine = [E2 ubiquitin-conjugating enzyme]-L-cysteine + N(6)-ubiquitinyl-[acceptor protein]-L-lysine.. The protein operates within protein modification; protein ubiquitination. Functionally, mediates ubiquitination and subsequent desumoylation/degradation of sumoylated proteins and proteins containing SUMO-like domains. Involved in maintaining genome stability where it acts in the cellular response to DNA damage. This is E3 ubiquitin-protein ligase complex slx8-rfp subunit rfp2 (rfp2) from Schizosaccharomyces pombe (strain 972 / ATCC 24843) (Fission yeast).